The chain runs to 187 residues: GTP cyclohydrolase 1 1 (187 aa).

This sequence belongs to the GTP cyclohydrolase I family. As to quaternary structure, homomer.

The catalysed reaction is GTP + H2O = 7,8-dihydroneopterin 3'-triphosphate + formate + H(+). It functions in the pathway cofactor biosynthesis; 7,8-dihydroneopterin triphosphate biosynthesis; 7,8-dihydroneopterin triphosphate from GTP: step 1/1. The sequence is that of GTP cyclohydrolase 1 1 from Pseudomonas syringae pv. tomato (strain ATCC BAA-871 / DC3000).